Reading from the N-terminus, the 670-residue chain is Lebercilin-like protein (670 aa).

The tract at residues arginine 24–alanine 44 is disordered. Coiled coils occupy residues leucine 148–glutamate 259 and alanine 305–isoleucine 336. The interval tyrosine 351 to serine 402 is disordered. Residues proline 368–serine 380 show a composition bias toward polar residues. Residues glutamate 420 to valine 440 are a coiled coil. 3 disordered regions span residues arginine 495–glutamine 520, leucine 533–lysine 594, and glycine 606–aspartate 647. Over residues alanine 546 to histidine 558 the composition is skewed to polar residues. Basic and acidic residues-rich tracts occupy residues serine 560 to serine 572, lysine 585 to lysine 594, and glycine 621 to histidine 632. The segment covering serine 637–aspartate 647 has biased composition (polar residues).

Belongs to the LCA5 family.

The sequence is that of Lebercilin-like protein from Papio anubis (Olive baboon).